We begin with the raw amino-acid sequence, 469 residues long: GTPase Der (469 aa).

EngA-type G domains lie at 3–166 and 177–350; these read PVIA…PEDE and LRLA…ESAN. GTP contacts are provided by residues 9–16, 56–60, 118–121, 183–190, 230–234, and 295–298; these read GRPNVGKS, DTGGI, NKVD, DTAGV, and NKWD. The 85-residue stretch at 351–435 folds into the KH-like domain; that stretch reads LKVSPAKLTQ…PVKIEFKTSE (85 aa).

It belongs to the TRAFAC class TrmE-Era-EngA-EngB-Septin-like GTPase superfamily. EngA (Der) GTPase family. As to quaternary structure, associates with the 50S ribosomal subunit.

In terms of biological role, GTPase that plays an essential role in the late steps of ribosome biogenesis. The sequence is that of GTPase Der from Acinetobacter baumannii (strain SDF).